Here is a 125-residue protein sequence, read N- to C-terminus: Protein ApaG (125 aa).

The 123-residue stretch at Thr3–Asn125 folds into the ApaG domain.

The polypeptide is Protein ApaG (Anaeromyxobacter sp. (strain K)).